The primary structure comprises 228 residues: Translin (228 aa).

Positions 86 to 90 are DNA/RNA binding; it reads RFHEH. Residues 177 to 198 form a leucine-zipper region; sequence LDSGFRLLNLKNDSLRKRYDGL. The residue at position 187 (K187) is an N6-acetyllysine. S190 is modified (phosphoserine). The residue at position 199 (K199) is an N6-acetyllysine.

It belongs to the translin family. In terms of assembly, ring-shaped heterooctamer of six TSN and two TSNAX subunits, DNA/RNA binding occurs inside the ring.

It is found in the cytoplasm. It localises to the nucleus. Its function is as follows. DNA-binding protein that specifically recognizes consensus sequences at the breakpoint junctions in chromosomal translocations, mostly involving immunoglobulin (Ig)/T-cell receptor gene segments. Seems to recognize single-stranded DNA ends generated by staggered breaks occurring at recombination hot spots. In terms of biological role, exhibits both single-stranded and double-stranded endoribonuclease activity. May act as an activator of RNA-induced silencing complex (RISC) by facilitating endonucleolytic cleavage of the siRNA passenger strand. The protein is Translin of Homo sapiens (Human).